A 213-amino-acid polypeptide reads, in one-letter code: MRSNYIVIEGLEGAGKTTARNVVVDTLKELGIEQMVFTREPGGTQLAEKLRSLVLDIKSVGDEVIDVKAEVLMFYAARVQLVETVIKPALAEGQWVIGDRHDLSTQAYQGGGRGIDQQMLATLRNAVLGDFRPNLTLYLDVTPEVGLKRARARGELDRIEQESLDFFNRTRARYLELAAQDDSIRTIDATQSLEGVTRSIRETITAWLQEQQA.

An ATP-binding site is contributed by 10 to 17 (GLEGAGKT).

The protein belongs to the thymidylate kinase family.

The enzyme catalyses dTMP + ATP = dTDP + ADP. Phosphorylation of dTMP to form dTDP in both de novo and salvage pathways of dTTP synthesis. This chain is Thymidylate kinase, found in Enterobacter sp. (strain 638).